A 45-amino-acid polypeptide reads, in one-letter code: DNA-directed RNA polymerase subunit Rpo12 (45 aa).

Zn(2+) is bound by residues Cys-8, Cys-23, and Cys-26.

Belongs to the archaeal Rpo12/eukaryotic RPC10 RNA polymerase subunit family. In terms of assembly, part of the RNA polymerase complex. It depends on Zn(2+) as a cofactor.

The protein localises to the cytoplasm. It carries out the reaction RNA(n) + a ribonucleoside 5'-triphosphate = RNA(n+1) + diphosphate. Its function is as follows. DNA-dependent RNA polymerase (RNAP) catalyzes the transcription of DNA into RNA using the four ribonucleoside triphosphates as substrates. The protein is DNA-directed RNA polymerase subunit Rpo12 of Methanocella arvoryzae (strain DSM 22066 / NBRC 105507 / MRE50).